A 404-amino-acid polypeptide reads, in one-letter code: S-adenosylmethionine synthase (404 aa).

A compositionally biased stretch (polar residues) spans 1 to 13; it reads MSQSRYFFTSESV. Positions 1–20 are disordered; that stretch reads MSQSRYFFTSESVSEGHPDK. An ATP-binding site is contributed by H17. D19 provides a ligand contact to Mg(2+). Position 45 (E45) interacts with K(+). L-methionine contacts are provided by E58 and Q101. Residues 101–111 are flexible loop; that stretch reads QSPDINRGVDR. Residues 172–174, 245–246, D254, 260–261, A277, and K281 each bind ATP; these read DAK, RF, and RK. D254 is an L-methionine binding site. L-methionine is bound at residue K285.

This sequence belongs to the AdoMet synthase family. Homotetramer; dimer of dimers. Mg(2+) is required as a cofactor. Requires K(+) as cofactor.

Its subcellular location is the cytoplasm. The enzyme catalyses L-methionine + ATP + H2O = S-adenosyl-L-methionine + phosphate + diphosphate. Its pathway is amino-acid biosynthesis; S-adenosyl-L-methionine biosynthesis; S-adenosyl-L-methionine from L-methionine: step 1/1. Functionally, catalyzes the formation of S-adenosylmethionine (AdoMet) from methionine and ATP. The overall synthetic reaction is composed of two sequential steps, AdoMet formation and the subsequent tripolyphosphate hydrolysis which occurs prior to release of AdoMet from the enzyme. This is S-adenosylmethionine synthase from Chlorobium limicola (strain DSM 245 / NBRC 103803 / 6330).